Reading from the N-terminus, the 372-residue chain is Spermidine/putrescine import ATP-binding protein PotA (372 aa).

The ABC transporter domain occupies 12–242; the sequence is IQLKGLNKSF…PTNLFVARFI (231 aa). 44 to 51 is an ATP binding site; it reads GPSGCGKT.

This sequence belongs to the ABC transporter superfamily. Spermidine/putrescine importer (TC 3.A.1.11.1) family. In terms of assembly, the complex is composed of two ATP-binding proteins (PotA), two transmembrane proteins (PotB and PotC) and a solute-binding protein (PotD).

It localises to the cell inner membrane. It catalyses the reaction ATP + H2O + polyamine-[polyamine-binding protein]Side 1 = ADP + phosphate + polyamineSide 2 + [polyamine-binding protein]Side 1.. In terms of biological role, part of the ABC transporter complex PotABCD involved in spermidine/putrescine import. Responsible for energy coupling to the transport system. The protein is Spermidine/putrescine import ATP-binding protein PotA of Photobacterium profundum (strain SS9).